Consider the following 657-residue polypeptide: MFGHVFSRRTSFLVRCFHVAKKFSNPEPEDILFSALCLNLRQRRWNTLHQFSSSLTNPLISRVLREFRSSPKLALEFYNWVLRSNTVAKSENRFEASCVMIHLLVGSRRFDDALSIMANLMSVEGEKLSPLHVLSGLIRSYQACGSSPDVFDSLVRACTQNGDAQGAYEVIEQTRAEGFCVSVHALNNFMGCLLNVNEIDRFWKVYKEMDSLGYVENVNTFNLVIYSFCKESKLFEALSVFYRMLKCGVWPNVVSFNMMIDGACKTGDMRFALQLLGKMGMMSGNFVSPNAVTYNSVINGFCKAGRLDLAERIRGDMVKSGVDCNERTYGALVDAYGRAGSSDEALRLCDEMTSKGLVVNTVIYNSIVYWLFMEGDIEGAMSVLRDMNSKNMQIDRFTQAIVVRGLCRNGYVKEAVEFQRQISEKKLVEDIVCHNTLMHHFVRDKKLACADQILGSMLVQGLSLDAISFGTLIDGYLKEGKLERALEIYDGMIKMNKTSNLVIYNSIVNGLSKRGMAGAAEAVVNAMEIKDIVTYNTLLNESLKTGNVEEADDILSKMQKQDGEKSVSLVTFNIMINHLCKFGSYEKAKEVLKFMVERGVVPDSITYGTLITSFSKHRSQEKVVELHDYLILQGVTPHEHIYLSIVRPLLDRENGRP.

The N-terminal 74 residues, 1–74 (MFGHVFSRRT…REFRSSPKLA (74 aa)), are a transit peptide targeting the mitochondrion. 14 PPR repeats span residues 147-181 (SPDVFDSLVRACTQNGDAQGAYEVIEQTRAEGFCV), 182-216 (SVHALNNFMGCLLNVNEIDRFWKVYKEMDSLGYVE), 217-251 (NVNTFNLVIYSFCKESKLFEALSVFYRMLKCGVWP), 252-282 (NVVSFNMMIDGACKTGDMRFALQLLGKMGMM), 290-324 (NAVTYNSVINGFCKAGRLDLAERIRGDMVKSGVDC), 325-359 (NERTYGALVDAYGRAGSSDEALRLCDEMTSKGLVV), 360-394 (NTVIYNSIVYWLFMEGDIEGAMSVLRDMNSKNMQI), 395-429 (DRFTQAIVVRGLCRNGYVKEAVEFQRQISEKKLVE), 430-464 (DIVCHNTLMHHFVRDKKLACADQILGSMLVQGLSL), 465-499 (DAISFGTLIDGYLKEGKLERALEIYDGMIKMNKTS), 500-530 (NLVIYNSIVNGLSKRGMAGAAEAVVNAMEIK), 531-565 (DIVTYNTLLNESLKTGNVEEADDILSKMQKQDGEK), 568-602 (SLVTFNIMINHLCKFGSYEKAKEVLKFMVERGVVP), and 603-637 (DSITYGTLITSFSKHRSQEKVVELHDYLILQGVTP).

This sequence belongs to the PPR family. P subfamily.

Its subcellular location is the mitochondrion. This Arabidopsis thaliana (Mouse-ear cress) protein is Pentatricopeptide repeat-containing protein At1g11710, mitochondrial.